Here is a 1114-residue protein sequence, read N- to C-terminus: Extracellular sulfatase SULF-1 homolog (1114 aa).

The N-terminal stretch at 1–25 (MMRHSSLRLIIGGLILLLFVLNVFS) is a signal peptide. Aspartate 62, aspartate 63, and cysteine 98 together coordinate Ca(2+). The active-site Nucleophile is the cysteine 98. Cysteine 98 is subject to 3-oxoalanine (Cys). 5 N-linked (GlcNAc...) asparagine glycosylation sites follow: asparagine 122, asparagine 159, asparagine 181, asparagine 208, and asparagine 251. Aspartate 327 and histidine 328 together coordinate Ca(2+). Residue asparagine 447 is glycosylated (N-linked (GlcNAc...) asparagine). Low complexity predominate over residues 466-479 (SSSSTAATLMSSTA). The tract at residues 466–504 (SSSSTAATLMSSTAQQPEDGEEEVETDNEEDDVDGDGAM) is disordered. The segment covering 483 to 502 (EDGEEEVETDNEEDDVDGDG) has biased composition (acidic residues). N-linked (GlcNAc...) asparagine glycans are attached at residues asparagine 683, asparagine 713, and asparagine 743. Residues 781–812 (KQLRESNKQALAAGRRNDNRRRNDQSVLDSGA) are disordered. Residues 795–804 (RRNDNRRRND) show a composition bias toward basic and acidic residues. Asparagine 817 carries an N-linked (GlcNAc...) asparagine glycan. Basic and acidic residues predominate over residues 876–895 (ADSKEMAREARRKLKEERQR). The disordered stretch occupies residues 876-901 (ADSKEMAREARRKLKEERQRKKERKR). 3 N-linked (GlcNAc...) asparagine glycosylation sites follow: asparagine 945, asparagine 955, and asparagine 974. The segment at 1073–1114 (LSKYNRLTGSQQSHMKRRPWKQTPLQQSPRFLRTHSVTPAQA) is disordered. Positions 1095–1114 (TPLQQSPRFLRTHSVTPAQA) are enriched in polar residues.

The protein belongs to the sulfatase family. Ca(2+) is required as a cofactor. Post-translationally, the conversion to 3-oxoalanine (also known as C-formylglycine, FGly), of a serine or cysteine residue in prokaryotes and of a cysteine residue in eukaryotes, is critical for catalytic activity.

The protein localises to the endoplasmic reticulum. Its subcellular location is the golgi apparatus. It localises to the golgi stack. It is found in the cell surface. This Drosophila melanogaster (Fruit fly) protein is Extracellular sulfatase SULF-1 homolog (Sulf1).